The primary structure comprises 663 residues: Zinc finger protein GLI2 (663 aa).

The tract at residues 159 to 186 is disordered; it reads ISSNSNCISDSSQSKQSSESAVSSTVNP. Residues 160-182 are compositionally biased toward low complexity; the sequence is SSNSNCISDSSQSKQSSESAVSS. C2H2-type zinc fingers lie at residues 234 to 259, 267 to 294, 300 to 324, 330 to 355, and 361 to 386; these read TNCHWEGCTKEYDTQEQLVHHINNDH, FVCRWQDCTREQKPFKAQYMLVVHMRRH, HKCTFEGCSKAYSRLENLKTHLRSH, YVCEHEGCNKAFSNASDRAKHQNRTH, and YVCKIPGCTKRYTDPSSLRKHVKTVH. 4 disordered regions span residues 374 to 440, 452 to 481, 544 to 578, and 619 to 663; these read DPSS…MEDC, VMCQSSPGGQSSCSSEPSPLGSTNNNDSGV, CSWVNPAPQGRNTKLPPISGNGSILENSGGSSRTL, and SGIS…DIKL. A compositionally biased stretch (basic and acidic residues) spans 386–402; it reads HGPDAHVTKKQRNDVHP. A compositionally biased stretch (low complexity) spans 456–473; that stretch reads SSPGGQSSCSSEPSPLGS. Composition is skewed to polar residues over residues 563 to 578 and 619 to 647; these read GNGSILENSGGSSRTL and SGISPYFSSRRSSEASQLGHRPNNTSSAD.

This sequence belongs to the GLI C2H2-type zinc-finger protein family.

The protein localises to the nucleus. The protein resides in the cytoplasm. It is found in the cell projection. Its subcellular location is the cilium. Functions as a transcription regulator in the hedgehog (Hh) pathway. Functions as a transcriptional activator. May also function as transcriptional repressor. Binds to the DNA sequence 5'-GAACCACCCA-3'. Is involved in the smoothened (SHH) signaling pathway. Required for normal skeleton development. The chain is Zinc finger protein GLI2 from Gallus gallus (Chicken).